The sequence spans 606 residues: RUN and FYVE domain-containing protein 2 (606 aa).

Residues 37-169 (DSDYPPLQQF…IDANLCVKGE (133 aa)) form the RUN domain. Residues 210-534 (EELNRQLNST…IKEANKALQG (325 aa)) are a coiled coil. Residues 540-598 (DKEATHCKLCEKEFSLSKRKHHCRNCGEIFCNACSDNELPLPSSPKPVRVCDSCHALLI) form an FYVE-type zinc finger. Residues Cys-546, Cys-549, Cys-562, Cys-565, Cys-570, Cys-573, Cys-590, and Cys-593 each coordinate Zn(2+).

Interacts with BMX. As to expression, expressed in brain, lung and testis.

It is found in the nucleus. This chain is RUN and FYVE domain-containing protein 2 (RUFY2), found in Homo sapiens (Human).